We begin with the raw amino-acid sequence, 217 residues long: Nucleoside diphosphate kinase homolog 5 (217 aa).

The interval 18–151 is NDK; sequence ERTLALIKPD…REIRFMFPHS (134 aa).

This sequence belongs to the NDK family.

Its subcellular location is the cell projection. It is found in the cilium. Its function is as follows. Functions as part of axonemal radial spoke complexes that play an important part in the motility of sperm and cilia. Does not seem to have nucleoside diphosphate kinase (NDPK) activity. Exhibits a 3'-5' exonuclease activity with a preference for single-stranded DNA, suggesting roles in DNA proofreading and repair. The protein is Nucleoside diphosphate kinase homolog 5 (nme5) of Danio rerio (Zebrafish).